The chain runs to 440 residues: Cell division protein FtsA (440 aa).

The protein belongs to the FtsA/MreB family. Self-interacts. Interacts with FtsZ.

The protein localises to the cell membrane. Functionally, cell division protein that is involved in the assembly of the Z ring. May serve as a membrane anchor for the Z ring. This chain is Cell division protein FtsA, found in Enterococcus faecalis (strain ATCC 700802 / V583).